Consider the following 1058-residue polypeptide: Bromodomain-containing protein 1 (1058 aa).

Residues 1-12 show a composition bias toward basic residues; it reads MRRKGRCHRGSA. The tract at residues 1-26 is disordered; that stretch reads MRRKGRCHRGSAARHPSSPCSVKHSP. Positions 31 to 80 are interaction with KAT7/HBO1 and histones; that stretch reads LTYAQAQRMVEIEIEGRLHRISIFDPLEIILEDDLTAQEMSECNSNKENS. A disordered region spans residues 92–116; the sequence is HKNNRVKKKNEALPSAHGTPASASA. Ser-128 is modified (phosphoserine). Residues 214–264 form a PHD-type 1 zinc finger; the sequence is DAVCCICMDGECQNSNVILFCDMCNLAVHQECYGVPYIPEGQWLCRHCLQS. The C2HC pre-PHD-type zinc finger occupies 268-301; it reads PADCVLCPNKGGAFKKTDDDRWGHVVCALWIPEV. The PHD-type 2 zinc-finger motif lies at 325–389; the sequence is LTCYLCKQKG…RKTAYCDVHT (65 aa). N6-acetyllysine occurs at positions 368, 516, and 519. Residues Lys-554 and Lys-594 each participate in a glycyl lysine isopeptide (Lys-Gly) (interchain with G-Cter in SUMO2) cross-link. The 105-residue stretch at 562 to 666 folds into the Bromo domain; it reads LRLTPLTVLL…DQGGVVLRQA (105 aa). Disordered regions lie at residues 755–776 and 791–868; these read LSQQ…EEDG and LETL…DSSF. Residue Ser-803 is modified to Phosphoserine. Low complexity predominate over residues 852 to 867; that stretch reads SESSISSSNSPLCDSS. Lys-903 carries the post-translational modification N6-acetyllysine. Phosphoserine is present on Arg-906. Positions 929 to 1012 constitute a PWWP domain; the sequence is PLKVVWAKCS…KSKMVPLGID (84 aa). 2 positions are modified to phosphoserine: Ser-1052 and Ser-1055.

As to quaternary structure, component of some HBO1 complex composed of KAT7/HBO1, MEAF6, ING4 and BRD1/BRPF2. Component of the MOZ/MORF complex composed at least of ING5, KAT6A, KAT6B, MEAF6 and one of BRPF1, BRD1/BRPF2 and BRPF3. Interacts (via PHD-type zinc finger domain) with unmodified histone H3. Interacts (via PWWP domain) with dimethylated and trimethylated 'Lys-79' on histone H3. As to expression, highly expressed in testis.

Its subcellular location is the nucleus. The protein localises to the chromosome. Its function is as follows. Scaffold subunit of various histone acetyltransferase (HAT) complexes, such as the MOZ/MORF and HBO1 complexes, that acts as a regulator of hematopoiesis. Plays a key role in HBO1 complex by directing KAT7/HBO1 specificity towards histone H3 'Lys-14' acetylation (H3K14ac), thereby promoting erythroid differentiation. The protein is Bromodomain-containing protein 1 of Homo sapiens (Human).